The following is a 101-amino-acid chain: Small ribosomal subunit protein bS18c (101 aa).

It belongs to the bacterial ribosomal protein bS18 family. Part of the 30S ribosomal subunit.

It localises to the plastid. Its subcellular location is the chloroplast. This Gossypium barbadense (Sea Island cotton) protein is Small ribosomal subunit protein bS18c.